The primary structure comprises 152 residues: MRGPGHPLLLGLLLVLGAAGRGRGGAEPREPADGQALLRLVVELVQELRKHHSAEHKGLQLLGRDCALGRAEAAGLGPSPEQRVEIVPRDLRMKDKFLKHLTGPLYFSPKCSKHFHRLYHNTRDCTIPAYYKRCARLLTRLAVSPVCMEDKQ.

The signal sequence occupies residues 1 to 24 (MRGPGHPLLLGLLLVLGAAGRGRG). 2 cysteine pairs are disulfide-bonded: cysteine 111/cysteine 147 and cysteine 125/cysteine 134.

It belongs to the ALKAL family. As to quaternary structure, homodimer; interchain disulfide bond is not required for homodimerization. Widely expressed with highest levels in adrenal gland and modest levels in pancreas, testis and uterus.

Its subcellular location is the secreted. The protein localises to the cell membrane. Cytokine that acts as a physiological ligand for receptor tyrosine kinases LTK and ALK, leading to their activation. Cytokine-binding is sufficient to activate LTK. In contrast, ALKAL2-driven activation of ALK is coupled with heparin-binding to ALK. Stimulation of ALK signaling is involved in neural development and regulation of energy expenditure. In Homo sapiens (Human), this protein is ALK and LTK ligand 2.